Here is a 357-residue protein sequence, read N- to C-terminus: Peptide chain release factor 1 (357 aa).

Position 234 is an N5-methylglutamine (Gln234).

This sequence belongs to the prokaryotic/mitochondrial release factor family. In terms of processing, methylated by PrmC. Methylation increases the termination efficiency of RF1.

It localises to the cytoplasm. Functionally, peptide chain release factor 1 directs the termination of translation in response to the peptide chain termination codons UAG and UAA. In Chlorobaculum tepidum (strain ATCC 49652 / DSM 12025 / NBRC 103806 / TLS) (Chlorobium tepidum), this protein is Peptide chain release factor 1.